The following is a 230-amino-acid chain: Prepilin leader peptidase/N-methyltransferase (230 aa).

The next 7 membrane-spanning stretches (helical) occupy residues 1 to 21 (MIYF…WFYL), 60 to 80 (GHIL…QIAF), 84 to 104 (IFTV…YLDW), 114 to 134 (CLWL…LLTL), 140 to 160 (SAAS…FYYG), 181 to 201 (LETL…FSLI), and 208 to 228 (FLPF…VKYY).

The protein belongs to the peptidase A24 family.

The protein localises to the cell inner membrane. It carries out the reaction Typically cleaves a -Gly-|-Phe- bond to release an N-terminal, basic peptide of 5-8 residues from type IV prepilin, and then N-methylates the new N-terminal amino group, the methyl donor being S-adenosyl-L-methionine.. Functionally, plays a role in type II pseudopili formation by proteolytically removing the leader sequence from substrate proteins and subsequently monomethylating the alpha-amino group of the newly exposed N-terminal phenylalanine. Substrates include proteins required for biogenesis of the type II general secretory apparatus. The sequence is that of Prepilin leader peptidase/N-methyltransferase (hofD) from Haemophilus influenzae (strain ATCC 51907 / DSM 11121 / KW20 / Rd).